Reading from the N-terminus, the 109-residue chain is Protein reprimo (109 aa).

Asn-7 and Asn-18 each carry an N-linked (GlcNAc...) asparagine glycan. Residues 56 to 76 (VVQIAVMCVLSLTVVFGIFFL) form a helical membrane-spanning segment. Ser-98 carries the post-translational modification Phosphoserine.

It belongs to the reprimo family.

The protein localises to the cytoplasm. It localises to the membrane. In terms of biological role, may be involved in the regulation of p53-dependent G2 arrest of the cell cycle. Seems to induce cell cycle arrest by inhibiting CDK1 activity and nuclear translocation of the CDC2 cyclin B1 complex. This is Protein reprimo (Rprm) from Mus musculus (Mouse).